The sequence spans 710 residues: Subtilisin-like protease SBT4.8 (710 aa).

The signal sequence occupies residues 1–23; it reads MVKRASFCLLSCLIILFLSSVSA. A propeptide spans 24-111 (activation peptide); it reads IIYDPQDKQV…VFRSKNYKLQ (88 aa). The Inhibitor I9 domain maps to 33–110; the sequence is VYVVYMGSLP…SVFRSKNYKL (78 aa). Residues 115-559 enclose the Peptidase S8 domain; the sequence is SWDFMGMKEG…AGHVDPIAAI (445 aa). The active-site Charge relay system is Asp143. Residue Asn174 is glycosylated (N-linked (GlcNAc...) asparagine). The active-site Charge relay system is the His198. Residues Asn221, Asn364, and Asn419 are each glycosylated (N-linked (GlcNAc...) asparagine). The 61-residue stretch at 354-414 folds into the PA domain; that stretch reads KYPLEYGDYL…VLSQDDFDSL (61 aa). Catalysis depends on Ser498, which acts as the Charge relay system. 5 N-linked (GlcNAc...) asparagine glycosylation sites follow: Asn535, Asn568, Asn580, Asn618, and Asn636.

It belongs to the peptidase S8 family. The C-terminal propeptide is autocleaved.

It localises to the secreted. This Arabidopsis thaliana (Mouse-ear cress) protein is Subtilisin-like protease SBT4.8.